The sequence spans 256 residues: Late embryogenesis abundant protein 32 (256 aa).

The span at 1–14 (MSQEQPRRPREPVK) shows a compositional bias: basic and acidic residues. Residues 1-20 (MSQEQPRRPREPVKYGDVFE) form a disordered region. The Nuclear localization signal (NLS) signature appears at 5-9 (QPRRP). SMP domains are found at residues 13–66 (VKYG…TTNI), 130–187 (ITIG…HNAT), and 195–253 (IKLR…LNER).

It belongs to the LEA type SMP family. As to expression, embryo specific, only in dry mature seeds. Expressed at low levels.

It localises to the cytoplasm. Its subcellular location is the nucleus. LEA proteins are late embryonic proteins abundant in higher plant seed embryos. The function of those proteins is not known. In Arabidopsis thaliana (Mouse-ear cress), this protein is Late embryogenesis abundant protein 32.